The following is a 151-amino-acid chain: Cysteine protease inhibitor 5 (151 aa).

2 disulfides stabilise this stretch: Cys-13–Cys-65 and Cys-114–Cys-120.

The protein belongs to the protease inhibitor I3 (leguminous Kunitz-type inhibitor) family.

It localises to the vacuole. In terms of biological role, inhibitor of cysteine proteases. May protect the plant by inhibiting proteases of invading organisms. This Solanum tuberosum (Potato) protein is Cysteine protease inhibitor 5.